Reading from the N-terminus, the 228-residue chain is LexA repressor (228 aa).

Residues 28-48 (IREIGEALDIRSTNGVNDHLK) constitute a DNA-binding region (H-T-H motif). Active-site for autocatalytic cleavage activity residues include Ser146 and Lys183.

The protein belongs to the peptidase S24 family. As to quaternary structure, homodimer.

It carries out the reaction Hydrolysis of Ala-|-Gly bond in repressor LexA.. Represses a number of genes involved in the response to DNA damage (SOS response), including recA and lexA. In the presence of single-stranded DNA, RecA interacts with LexA causing an autocatalytic cleavage which disrupts the DNA-binding part of LexA, leading to derepression of the SOS regulon and eventually DNA repair. The chain is LexA repressor from Anaeromyxobacter dehalogenans (strain 2CP-1 / ATCC BAA-258).